The sequence spans 450 residues: LanC-like protein 2 (450 aa).

A lipid anchor (N-myristoyl glycine) is attached at Gly2. Residues 2–14 are interaction with inositol phospholipids; sequence GETMSKRLKFHLG. Tyr198 is modified (phosphotyrosine).

Belongs to the LanC-like protein family. In terms of assembly, interacts with an array of inositol phospholipids such as phosphatidylinositol 3-phosphate (PI3P), phosphatidylinositol 4-phosphate (PI4P) and phosphatidylinositol 5-phosphate (PI5P). PIP-binding enhances membrane association. Myristoylated. Essential for membrane association.

The protein localises to the nucleus. It localises to the cytoplasm. The protein resides in the cell membrane. Functionally, necessary for abscisic acid (ABA) binding on the cell membrane and activation of the ABA signaling pathway in granulocytes. The chain is LanC-like protein 2 (Lancl2) from Mus musculus (Mouse).